The following is a 319-amino-acid chain: Acetyl-coenzyme A carboxylase carboxyl transferase subunit alpha (319 aa).

In terms of domain architecture, CoA carboxyltransferase C-terminal spans 34–295; the sequence is ELEEEVSKLK…KVRLKRDLAD (262 aa).

Belongs to the AccA family. Acetyl-CoA carboxylase is a heterohexamer composed of biotin carboxyl carrier protein (AccB), biotin carboxylase (AccC) and two subunits each of ACCase subunit alpha (AccA) and ACCase subunit beta (AccD).

It localises to the cytoplasm. The enzyme catalyses N(6)-carboxybiotinyl-L-lysyl-[protein] + acetyl-CoA = N(6)-biotinyl-L-lysyl-[protein] + malonyl-CoA. Its pathway is lipid metabolism; malonyl-CoA biosynthesis; malonyl-CoA from acetyl-CoA: step 1/1. Functionally, component of the acetyl coenzyme A carboxylase (ACC) complex. First, biotin carboxylase catalyzes the carboxylation of biotin on its carrier protein (BCCP) and then the CO(2) group is transferred by the carboxyltransferase to acetyl-CoA to form malonyl-CoA. This Pseudoalteromonas translucida (strain TAC 125) protein is Acetyl-coenzyme A carboxylase carboxyl transferase subunit alpha.